The sequence spans 190 residues: Putative glutathione-dependent formaldehyde-activating enzyme (190 aa).

In terms of domain architecture, CENP-V/GFA spans 19–165 (FKGGKLYCHC…FRKEGLQTYD (147 aa)). The Zn(2+) site is built by Cys26, Cys28, Cys47, Cys49, Cys52, Cys94, and Cys97.

The protein belongs to the Gfa family. Requires Zn(2+) as cofactor.

It catalyses the reaction S-(hydroxymethyl)glutathione = glutathione + formaldehyde. Its pathway is one-carbon metabolism; formaldehyde degradation; formate from formaldehyde (glutathione route): step 1/3. Catalyzes the condensation of formaldehyde and glutathione to S-hydroxymethylglutathione. This Phaeosphaeria nodorum (strain SN15 / ATCC MYA-4574 / FGSC 10173) (Glume blotch fungus) protein is Putative glutathione-dependent formaldehyde-activating enzyme.